The sequence spans 141 residues: Small ribosomal subunit protein uS11 (141 aa).

This sequence belongs to the universal ribosomal protein uS11 family. Part of the 30S ribosomal subunit.

Functionally, located on the platform of the 30S subunit. This chain is Small ribosomal subunit protein uS11, found in Pyrobaculum calidifontis (strain DSM 21063 / JCM 11548 / VA1).